A 312-amino-acid chain; its full sequence is Malate dehydrogenase (312 aa).

Residues 12–17 (GSGFTG) and aspartate 36 contribute to the NAD(+) site. Residues arginine 87 and arginine 93 each coordinate substrate. NAD(+)-binding positions include asparagine 100 and 123-125 (LTN). Asparagine 125 serves as a coordination point for substrate. Serine 149 bears the Phosphoserine mark. A substrate-binding site is contributed by arginine 156. Residue histidine 180 is the Proton acceptor of the active site.

This sequence belongs to the LDH/MDH superfamily. MDH type 3 family.

It carries out the reaction (S)-malate + NAD(+) = oxaloacetate + NADH + H(+). Functionally, catalyzes the reversible oxidation of malate to oxaloacetate. This chain is Malate dehydrogenase, found in Oceanobacillus iheyensis (strain DSM 14371 / CIP 107618 / JCM 11309 / KCTC 3954 / HTE831).